Here is a 236-residue protein sequence, read N- to C-terminus: DNA repair and recombination protein RadB (236 aa).

The protein belongs to the eukaryotic RecA-like protein family. RadB subfamily.

Involved in DNA repair and in homologous recombination. May regulate the cleavage reactions of the branch-structured DNA. Has a very weak ATPase activity that is not stimulated by DNA. Binds DNA but does not promote DNA strands exchange. The polypeptide is DNA repair and recombination protein RadB (Halobacterium salinarum (strain ATCC 29341 / DSM 671 / R1)).